The chain runs to 303 residues: GPN-loop GTPase 2 (303 aa).

29–34 (GSGKST) is a GTP binding site. The Gly-Pro-Asn (GPN)-loop; involved in dimer interface motif lies at 85–87 (GPN). 187–190 (SKMD) contributes to the GTP binding site.

It belongs to the GPN-loop GTPase family. In terms of assembly, heterodimers with gpn1 or gpn3. Binds to RNA polymerase II (RNAPII).

Small GTPase required for proper localization of RNA polymerase II and III (RNAPII and RNAPIII). May act at an RNAP assembly step prior to nuclear import. This Xenopus tropicalis (Western clawed frog) protein is GPN-loop GTPase 2.